Reading from the N-terminus, the 334-residue chain is Protein U17/U16 (334 aa).

Belongs to the herpesviridae US22 family. In terms of processing, isoform 1 is not glycosylated.

Isoform 3 can transactivate the human immunodeficiency virus type 1 promoter. The polypeptide is Protein U17/U16 (U17/U16) (Homo sapiens (Human)).